Reading from the N-terminus, the 101-residue chain is uncharacterized protein (101 aa).

This is an uncharacterized protein from Sulfolobus islandicus filamentous virus (isolate Iceland/Hveragerdi) (SIFV).